A 76-amino-acid polypeptide reads, in one-letter code: Small ribosomal subunit protein bS16 (76 aa).

The protein belongs to the bacterial ribosomal protein bS16 family.

The sequence is that of Small ribosomal subunit protein bS16 from Helicobacter pylori (strain P12).